Reading from the N-terminus, the 183-residue chain is Threonylcarbamoyl-AMP synthase (183 aa).

The YrdC-like domain maps to 1–183 (MNREQIADAL…LRTNQLFRQG (183 aa)).

Belongs to the SUA5 family. TsaC subfamily.

It is found in the cytoplasm. It catalyses the reaction L-threonine + hydrogencarbonate + ATP = L-threonylcarbamoyladenylate + diphosphate + H2O. Required for the formation of a threonylcarbamoyl group on adenosine at position 37 (t(6)A37) in tRNAs that read codons beginning with adenine. Catalyzes the conversion of L-threonine, HCO(3)(-)/CO(2) and ATP to give threonylcarbamoyl-AMP (TC-AMP) as the acyladenylate intermediate, with the release of diphosphate. In Haemophilus influenzae (strain ATCC 51907 / DSM 11121 / KW20 / Rd), this protein is Threonylcarbamoyl-AMP synthase.